The chain runs to 250 residues: Ribonuclease 3 (250 aa).

Residues 1–15 (MTKTPAKKKRARSSK) are compositionally biased toward basic residues. The segment at 1–21 (MTKTPAKKKRARSSKAKGTDA) is disordered. The 129-residue stretch at 22 to 150 (NAALEARIGH…VIGAIFLDGG (129 aa)) folds into the RNase III domain. Glu-63 is a binding site for Mg(2+). Residue Asp-67 is part of the active site. Mg(2+)-binding residues include Asp-136 and Glu-139. Glu-139 is an active-site residue. The DRBM domain maps to 175–244 (DPKTVLQEWA…ASVMIEREGV (70 aa)).

The protein belongs to the ribonuclease III family. Homodimer. Requires Mg(2+) as cofactor.

Its subcellular location is the cytoplasm. The catalysed reaction is Endonucleolytic cleavage to 5'-phosphomonoester.. In terms of biological role, digests double-stranded RNA. Involved in the processing of primary rRNA transcript to yield the immediate precursors to the large and small rRNAs (23S and 16S). Processes some mRNAs, and tRNAs when they are encoded in the rRNA operon. Processes pre-crRNA and tracrRNA of type II CRISPR loci if present in the organism. In Bradyrhizobium diazoefficiens (strain JCM 10833 / BCRC 13528 / IAM 13628 / NBRC 14792 / USDA 110), this protein is Ribonuclease 3.